Here is a 235-residue protein sequence, read N- to C-terminus: Phosphatidylserine decarboxylase proenzyme (235 aa).

The active-site Schiff-base intermediate with substrate; via pyruvic acid is the Ser204. Ser204 bears the Pyruvic acid (Ser); by autocatalysis mark.

It belongs to the phosphatidylserine decarboxylase family. PSD-A subfamily. Heterodimer of a large membrane-associated beta subunit and a small pyruvoyl-containing alpha subunit. It depends on pyruvate as a cofactor. Post-translationally, is synthesized initially as an inactive proenzyme. Formation of the active enzyme involves a self-maturation process in which the active site pyruvoyl group is generated from an internal serine residue via an autocatalytic post-translational modification. Two non-identical subunits are generated from the proenzyme in this reaction, and the pyruvate is formed at the N-terminus of the alpha chain, which is derived from the carboxyl end of the proenzyme. The post-translation cleavage follows an unusual pathway, termed non-hydrolytic serinolysis, in which the side chain hydroxyl group of the serine supplies its oxygen atom to form the C-terminus of the beta chain, while the remainder of the serine residue undergoes an oxidative deamination to produce ammonia and the pyruvoyl prosthetic group on the alpha chain.

The protein resides in the cell membrane. The enzyme catalyses a 1,2-diacyl-sn-glycero-3-phospho-L-serine + H(+) = a 1,2-diacyl-sn-glycero-3-phosphoethanolamine + CO2. It participates in phospholipid metabolism; phosphatidylethanolamine biosynthesis; phosphatidylethanolamine from CDP-diacylglycerol: step 2/2. Functionally, catalyzes the formation of phosphatidylethanolamine (PtdEtn) from phosphatidylserine (PtdSer). This chain is Phosphatidylserine decarboxylase proenzyme, found in Mycobacterium sp. (strain KMS).